Consider the following 674-residue polypeptide: DNA ligase (674 aa).

NAD(+) is bound by residues Asp-35–Asp-39, Ser-84–Leu-85, and Glu-116. Catalysis depends on Lys-118, which acts as the N6-AMP-lysine intermediate. 4 residues coordinate NAD(+): Arg-139, Glu-176, Lys-293, and Lys-317. Residues Cys-411, Cys-414, Cys-429, and Cys-435 each coordinate Zn(2+). The 82-residue stretch at Asp-593–Val-674 folds into the BRCT domain.

The protein belongs to the NAD-dependent DNA ligase family. LigA subfamily. Requires Mg(2+) as cofactor. The cofactor is Mn(2+).

The enzyme catalyses NAD(+) + (deoxyribonucleotide)n-3'-hydroxyl + 5'-phospho-(deoxyribonucleotide)m = (deoxyribonucleotide)n+m + AMP + beta-nicotinamide D-nucleotide.. Functionally, DNA ligase that catalyzes the formation of phosphodiester linkages between 5'-phosphoryl and 3'-hydroxyl groups in double-stranded DNA using NAD as a coenzyme and as the energy source for the reaction. It is essential for DNA replication and repair of damaged DNA. The protein is DNA ligase of Saccharophagus degradans (strain 2-40 / ATCC 43961 / DSM 17024).